The primary structure comprises 432 residues: MHYLNISFSHKNSTLDVREKLSYKDDYATKGCLSKLNSGESINESILISTCNRMEVFCSCSDIASATKHIFEMLAARSGVSIDELEGRADIFDDSSAIHHLFSVASSLDSMVIGETQIAGQLKDAFRFSYDNGFCSQKLARAMHHAFKCAAKVRNATDISSKPVSIASVAVSKLKSVLDNVEGKKALVIGVGEMSEITAKHLLSSGADVYITNRTKHKAEKLASECGAKVLDMQDLHKAVNEFEILFTATSSSEPIITDEIIKPCDFDRYWFDMAVPRDINYHKGDRINLYVVDDLKNIVDQNMSFREDGARKAHGIIGRSTVEFFEWLNTLNIEPMIKEIYEKAFEAARIESQRVIKKGFIPKEYEDQIHKMSQQVLKRFLHQMSSKMRSVSEESKADMLTSAVQFLIEKDQRDIPDKYKCEHALNIIEGR.

Substrate-binding positions include 50–53 (TCNR), Ser110, 115–117 (ETQ), and Gln121. Cys51 functions as the Nucleophile in the catalytic mechanism. 190–195 (GVGEMS) lines the NADP(+) pocket.

This sequence belongs to the glutamyl-tRNA reductase family. As to quaternary structure, homodimer.

The catalysed reaction is (S)-4-amino-5-oxopentanoate + tRNA(Glu) + NADP(+) = L-glutamyl-tRNA(Glu) + NADPH + H(+). The protein operates within porphyrin-containing compound metabolism; protoporphyrin-IX biosynthesis; 5-aminolevulinate from L-glutamyl-tRNA(Glu): step 1/2. Catalyzes the NADPH-dependent reduction of glutamyl-tRNA(Glu) to glutamate 1-semialdehyde (GSA). The protein is Glutamyl-tRNA reductase of Sulfurimonas denitrificans (strain ATCC 33889 / DSM 1251) (Thiomicrospira denitrificans (strain ATCC 33889 / DSM 1251)).